A 337-amino-acid chain; its full sequence is Receptor like protein kinase S.3 (337 aa).

The Protein kinase domain maps to 50 to 316 (FKESELFGTE…VNYLEGNDVL (267 aa)). ATP is bound by residues 56 to 64 (FGTEANGTV) and Lys-78. Tyr-123 carries the phosphotyrosine modification. Asp-171 functions as the Proton acceptor in the catalytic mechanism.

This sequence belongs to the protein kinase superfamily. Ser/Thr protein kinase family.

The catalysed reaction is L-seryl-[protein] + ATP = O-phospho-L-seryl-[protein] + ADP + H(+). The enzyme catalyses L-threonyl-[protein] + ATP = O-phospho-L-threonyl-[protein] + ADP + H(+). The sequence is that of Receptor like protein kinase S.3 (LECRKS3) from Arabidopsis thaliana (Mouse-ear cress).